A 127-amino-acid chain; its full sequence is Fumarate reductase subunit C (127 aa).

3 helical membrane passes run 30-50 (ATVL…GSLV), 67-87 (IVVA…QTFF), and 107-127 (IIVL…LIVM).

Belongs to the FrdC family. As to quaternary structure, part of an enzyme complex containing four subunits: a flavoprotein (FrdA), an iron-sulfur protein (FrdB), and two hydrophobic anchor proteins (FrdC and FrdD).

It is found in the cell inner membrane. Its function is as follows. Anchors the catalytic components of the fumarate reductase complex to the cell membrane, binds quinones. In Vibrio campbellii (strain ATCC BAA-1116), this protein is Fumarate reductase subunit C.